The following is a 643-amino-acid chain: Threonine--tRNA ligase (643 aa).

One can recognise a TGS domain in the interval 1–61; sequence MIKVTLKDGS…KEDVSLSICT (61 aa). A catalytic region spans residues 240–540; that stretch reads DHNKLGRELK…LIEKYAGAFP (301 aa). Residues Cys335, His386, and His517 each coordinate Zn(2+).

The protein belongs to the class-II aminoacyl-tRNA synthetase family. Homodimer. Requires Zn(2+) as cofactor.

Its subcellular location is the cytoplasm. It carries out the reaction tRNA(Thr) + L-threonine + ATP = L-threonyl-tRNA(Thr) + AMP + diphosphate + H(+). Its function is as follows. Catalyzes the attachment of threonine to tRNA(Thr) in a two-step reaction: L-threonine is first activated by ATP to form Thr-AMP and then transferred to the acceptor end of tRNA(Thr). Also edits incorrectly charged L-seryl-tRNA(Thr). The protein is Threonine--tRNA ligase of Clostridium botulinum (strain Eklund 17B / Type B).